Reading from the N-terminus, the 308-residue chain is MQNAVSQAISQGIHVRREILGSLTYEQRVFLLEDLFVDLFGHQHVMLQRWAALTGQSAQVDTGYIAQFVASIVLGEPGQGFRGKGDDLADGSEVKSAANISGVDRPRWNHNLGSLDDDEHRRSRGLPTAGEEYLGVPYMFYLLVDRPHGVSDPAPIRIRAWCIDAQEDGDWRDLFETFLTSRRGRTYNFQLHPPVGYDDDVVVNTLGNLDFSNVLVFDARLSLADRDRPEIDWHVPLPTQVIPVTGRTRALRYGGRGARPTRLTNTADIVLGTNDLGALFPGVLAPRDSYDLATVSEIETEAEVEEYS.

It catalyses the reaction Endonucleolytic cleavage of DNA to give specific double-stranded fragments with terminal 5'-phosphates.. Its function is as follows. A P subtype restriction enzyme that recognizes the double-stranded sequence 5'-GATNNNNATC-3' and cleaves after N-5. The sequence is that of Type II restriction enzyme MamI from Microbacterium ammoniaphilum.